The primary structure comprises 127 residues: Glycine cleavage system H protein (127 aa).

The Lipoyl-binding domain occupies 22-104 (QVVIGITHFA…YEGAWMVKVE (83 aa)). The residue at position 63 (K63) is an N6-lipoyllysine.

Belongs to the GcvH family. The glycine cleavage system is composed of four proteins: P, T, L and H. Requires (R)-lipoate as cofactor.

Its function is as follows. The glycine cleavage system catalyzes the degradation of glycine. The H protein shuttles the methylamine group of glycine from the P protein to the T protein. Is also involved in protein lipoylation via its role as an octanoyl/lipoyl carrier protein intermediate. This chain is Glycine cleavage system H protein, found in Bacillus cytotoxicus (strain DSM 22905 / CIP 110041 / 391-98 / NVH 391-98).